The chain runs to 535 residues: Light-independent protochlorophyllide reductase subunit B (535 aa).

D36 serves as a coordination point for [4Fe-4S] cluster. Catalysis depends on D292, which acts as the Proton donor. 428–429 provides a ligand contact to substrate; it reads GL. A disordered region spans residues 447–483; that stretch reads SDDAAKAEPDQPVSNAHGHTESKTVSQGEPIASDEGG.

The protein belongs to the ChlB/BchB/BchZ family. As to quaternary structure, protochlorophyllide reductase is composed of three subunits; BchL, BchN and BchB. Forms a heterotetramer of two BchB and two BchN subunits. The cofactor is [4Fe-4S] cluster.

It carries out the reaction chlorophyllide a + oxidized 2[4Fe-4S]-[ferredoxin] + 2 ADP + 2 phosphate = protochlorophyllide a + reduced 2[4Fe-4S]-[ferredoxin] + 2 ATP + 2 H2O. It participates in porphyrin-containing compound metabolism; bacteriochlorophyll biosynthesis (light-independent). Component of the dark-operative protochlorophyllide reductase (DPOR) that uses Mg-ATP and reduced ferredoxin to reduce ring D of protochlorophyllide (Pchlide) to form chlorophyllide a (Chlide). This reaction is light-independent. The NB-protein (BchN-BchB) is the catalytic component of the complex. The chain is Light-independent protochlorophyllide reductase subunit B from Chlorobium phaeobacteroides (strain DSM 266 / SMG 266 / 2430).